A 613-amino-acid polypeptide reads, in one-letter code: Nuclear receptor subfamily 1 group D member 1 (613 aa).

Residues Met1–Cys48 show a composition bias toward polar residues. Residues Met1–Ser70 form a required for phosphorylation by CSNK1E and cytoplasmic localization region. The segment at Met1–Gly102 is disordered. The tract at residues Met1–Met129 is modulating. Positions Pro49–Thr285 are crucial for activation of GJA1. A phosphoserine; by GSK3-beta mark is found at Ser55 and Ser59. The span at Gly69 to Gly102 shows a compositional bias: low complexity. Residues Val130–Phe206 constitute a DNA-binding region (nuclear receptor). NR C4-type zinc fingers lie at residues Cys133 to Cys153 and Cys170 to Cys194. An N6-acetyllysine; by KAT5 mark is found at Lys192 and Lys193. A disordered region spans residues Ser233 to Val286. A compositionally biased stretch (pro residues) spans Glu239–Ser262. Thr275 carries the post-translational modification Phosphothreonine; by CDK1. Residues Thr285–Gln613 form the NR LBD domain. Position 417 (Cys417) interacts with heme. An N6-acetyllysine modification is found at Lys590. His601 provides a ligand contact to heme.

Belongs to the nuclear hormone receptor family. NR1 subfamily. As to quaternary structure, binds DNA as a monomer or a homodimer. Interacts with C1D, SP1 and ZNHIT1. Interacts with OPHN1 (via C-terminus). Interacts with PER2; the interaction associates PER2 to BMAL1 promoter region. Interacts with CRY1. Interacts with CCAR2. Interacts with NR2E3. Interacts with SIAH2. Interacts with FBXW7 and CDK1. Interacts with HUWE1. Interacts with NR0B2. Interacts with NFIL3. Interacts (via domain NR LBD) with HSP90AA1 and HSP90AB1. Ubiquitinated, leading to its proteasomal degradation. Ubiquitinated by the SCF(FBXW7) complex when phosphorylated by CDK1 leading to its proteasomal degradation. Ubiquitinated by SIAH2; leading to its proteasomal degradation. Rapidly ubiquitinated in response to inflammatory triggers and sumoylation is a prerequisite to its ubiquitination. In terms of processing, sumoylated by UBE2I, desumoylated by SENP1, and sumoylation is a prerequisite to its ubiquitination. Post-translationally, phosphorylated by CSNK1E; phosphorylation enhances its cytoplasmic localization. Undergoes lysosome-mediated degradation in a time-dependent manner in the liver. As to expression, expressed in all tissues and cell lines examined. Expressed at high levels in some squamous carcinoma cell lines.

The protein localises to the nucleus. Its subcellular location is the cytoplasm. It is found in the cell projection. The protein resides in the dendrite. It localises to the dendritic spine. Functionally, transcriptional repressor which coordinates circadian rhythm and metabolic pathways in a heme-dependent manner. Integral component of the complex transcription machinery that governs circadian rhythmicity and forms a critical negative limb of the circadian clock by directly repressing the expression of core clock components BMAL1, CLOCK and CRY1. Also regulates genes involved in metabolic functions, including lipid and bile acid metabolism, adipogenesis, gluconeogenesis and the macrophage inflammatory response. Acts as a receptor for heme which stimulates its interaction with the NCOR1/HDAC3 corepressor complex, enhancing transcriptional repression. Recognizes two classes of DNA response elements within the promoter of its target genes and can bind to DNA as either monomers or homodimers, depending on the nature of the response element. Binds as a monomer to a response element composed of the consensus half-site motif 5'-[A/G]GGTCA-3' preceded by an A/T-rich 5' sequence (RevRE), or as a homodimer to a direct repeat of the core motif spaced by two nucleotides (RevDR-2). Acts as a potent competitive repressor of ROR alpha (RORA) function and regulates the levels of its ligand heme by repressing the expression of PPARGC1A, a potent inducer of heme synthesis. Regulates lipid metabolism by repressing the expression of APOC3 and by influencing the activity of sterol response element binding proteins (SREBPs); represses INSIG2 which interferes with the proteolytic activation of SREBPs which in turn govern the rhythmic expression of enzymes with key functions in sterol and fatty acid synthesis. Regulates gluconeogenesis via repression of G6PC1 and PEPCK and adipocyte differentiation via repression of PPARG. Regulates glucagon release in pancreatic alpha-cells via the AMPK-NAMPT-SIRT1 pathway and the proliferation, glucose-induced insulin secretion and expression of key lipogenic genes in pancreatic-beta cells. Positively regulates bile acid synthesis by increasing hepatic expression of CYP7A1 via repression of NR0B2 and NFIL3 which are negative regulators of CYP7A1. Modulates skeletal muscle oxidative capacity by regulating mitochondrial biogenesis and autophagy; controls mitochondrial biogenesis and respiration by interfering with the STK11-PRKAA1/2-SIRT1-PPARGC1A signaling pathway. Represses the expression of SERPINE1/PAI1, an important modulator of cardiovascular disease and the expression of inflammatory cytokines and chemokines in macrophages. Represses gene expression at a distance in macrophages by inhibiting the transcription of enhancer-derived RNAs (eRNAs). Plays a role in the circadian regulation of body temperature and negatively regulates thermogenic transcriptional programs in brown adipose tissue (BAT); imposes a circadian oscillation in BAT activity, increasing body temperature when awake and depressing thermogenesis during sleep. In concert with NR2E3, regulates transcriptional networks critical for photoreceptor development and function. In addition to its activity as a repressor, can also act as a transcriptional activator. In the ovarian granulosa cells acts as a transcriptional activator of STAR which plays a role in steroid biosynthesis. In collaboration with SP1, activates GJA1 transcription in a heme-independent manner. Represses the transcription of CYP2B10, CYP4A10 and CYP4A14. Represses the transcription of CES2. Represses and regulates the circadian expression of TSHB in a NCOR1-dependent manner. Negatively regulates the protein stability of NR3C1 and influences the time-dependent subcellular distribution of NR3C1, thereby affecting its transcriptional regulatory activity. Plays a critical role in the circadian control of neutrophilic inflammation in the lung; under resting, non-stress conditions, acts as a rhythmic repressor to limit inflammatory activity whereas in the presence of inflammatory triggers undergoes ubiquitin-mediated degradation thereby relieving inhibition of the inflammatory response. Plays a key role in the circadian regulation of microglial activation and neuroinflammation; suppresses microglial activation through the NF-kappaB pathway in the central nervous system. Plays a role in the regulation of the diurnal rhythms of lipid and protein metabolism in the skeletal muscle via transcriptional repression of genes controlling lipid and amino acid metabolism in the muscle. The protein is Nuclear receptor subfamily 1 group D member 1 (NR1D1) of Bos taurus (Bovine).